Reading from the N-terminus, the 244-residue chain is Ribonuclease 3 2 (244 aa).

The region spanning 11–136 is the RNase III domain; that stretch reads LKALLRRLGL…LLGALYLSVG (126 aa). E50 contacts Mg(2+). D54 is an active-site residue. D122 and E125 together coordinate Mg(2+). The active site involves E125. Residues 164 to 234 form the DRBM domain; the sequence is NYKEALQAWT…AQQAYQDFIA (71 aa).

It belongs to the ribonuclease III family. Homodimer. It depends on Mg(2+) as a cofactor.

The protein resides in the cytoplasm. It carries out the reaction Endonucleolytic cleavage to 5'-phosphomonoester.. Functionally, digests double-stranded RNA. Involved in the processing of primary rRNA transcript to yield the immediate precursors to the large and small rRNAs (23S and 16S). Processes some mRNAs, and tRNAs when they are encoded in the rRNA operon. Processes pre-crRNA and tracrRNA of type II CRISPR loci if present in the organism. This Synechocystis sp. (strain ATCC 27184 / PCC 6803 / Kazusa) protein is Ribonuclease 3 2.